The primary structure comprises 835 residues: Cell division control protein 48 (835 aa).

Positions 1–21 (MGEEHKPLLDASGVDPREEDK) are disordered. 257–263 (PGTGKTL) is an ATP binding site. Glycyl lysine isopeptide (Lys-Gly) (interchain with G-Cter in ubiquitin) cross-links involve residues Lys305, Lys322, and Lys346. The ATP site is built by Asn358 and His394. 2 positions are modified to phosphoserine: Ser472 and Ser519. Lys522 is covalently cross-linked (Glycyl lysine isopeptide (Lys-Gly) (interchain with G-Cter in ubiquitin)). 531-536 (GTGKTL) contributes to the ATP binding site. Residues Lys539, Lys594, and Lys673 each participate in a glycyl lysine isopeptide (Lys-Gly) (interchain with G-Cter in ubiquitin) cross-link. Basic and acidic residues predominate over residues 720-729 (EAEKEVKVEG). Residues 720–746 (EAEKEVKVEGEDVEMTDEGAKAEQEPE) are disordered. At Thr735 the chain carries Phosphothreonine. Ser770 bears the Phosphoserine mark. Residues 792-835 (SNFNFNDAPLGTTATDNANSNNSAPSGAGAAFGSNAEEDDDLYS) are disordered. Low complexity predominate over residues 802-826 (GTTATDNANSNNSAPSGAGAAFGSN).

It belongs to the AAA ATPase family. In terms of assembly, component of the heterotrimeric CDC48-NPL4-UFD1 ATPase complex. The CDC48-NPL4-UFD1 ATPase complex interacts with the HRD1 ubiquitin ligase complex composed of the E3 ligase HRD1, its cofactors HRD3, USA1 and DER1, substrate recruiting factor YOS9 and CDC48-binding protein UBX2. Interaction between the complexes is mediated by interaction between CDC48-NPL4-UFD1 complex member CDC48 and HRD1 complex member UBX2. Forms a complex composed of CDC48, NPL4, UFD1, UFD2 and SHP1. Forms a complex composed of CDC48, NPL4, UFD1, DOA1, SHP1 and deubiquitinase OTU1; within the complex interacts with DOA1/UFD3 and OTU1 to prevent multiubiquitination of substrates. Interacts with UFD2, to add further ubiquitin moieties; the interaction with UFD2 is prevented by DOA1/UFD3. Forms a complex composed of CDC48, DOA1, deubiquitinase UBP3 and probably BRE5; within the complex interacts with DOA1 and UBP3. Interacts (via C-terminus) with DOA1 (via PUL domain); the interaction is direct. Interacts with NPL4. Interacts with SHP1/UBX1, UBX2, UBX3, UBX4, UBX5, UBX6 and UBX7. Interacts with VMS1; the interaction recruits CDC48 to the mitochondria in response to mitochondrial stress. Component of the ribosome quality control complex (RQC), composed of the E3 ubiquitin ligase RKR1/LTN1, RQC1 and RQC2, as well as CDC48 and its ubiquitin-binding cofactors. RQC forms a stable complex with 60S ribosomal subunits. Interacts with ASE1 and CDC5; the interaction is likely to result in their degradation. Component of the DSCc E3 ligase complexes composed of at least TUL1, DSC2, DSC3, UBX3, CDC48 as well as VLD1 for the vacuole-localized complex or GLD1 for the Golgi/endosome-localized complex.

It is found in the microsome. Its subcellular location is the endoplasmic reticulum. The protein localises to the cytoplasm. The enzyme catalyses ATP + H2O = ADP + phosphate + H(+). With respect to regulation, the first ATP-binding region has low ATPase activity. The second ATP-binding region is responsible for ATPase activity. ATP binding to the first ATP-binding region induces intrinsic activity of the second ATP-binding region. While ATP binding to the first ATP-binding region appears to prevent ATP hydrolysis by the second ATP-binding region, ADP-binding to first region promotes the coordinate and cooperative ATPase cycle of the second ATP-binding region. ATP binding to the first ATP-binding region induces a conformational change, promoting the rotation of the first ATP-binding region relative to the second ATP-binding region in the hexamer. In terms of biological role, ATP-dependent chaperone which probably uses the energy provided by ATP hydrolysis to generate mechanical force to unfold substrate proteins, disassemble protein complexes, and disaggregate protein aggregates. By recruiting and promoting the degradation of ubiquitinated proteins, plays a role in the ubiquitin fusion degradation (UFD) pathway. Has a role in the endoplasmic reticulum-associated degradation (ERAD) pathway which mediates the cytoplasmic elimination of misfolded proteins exported from the ER. Required for the proteasome-dependent processing/activation of MGA2 and SPT23 transcription factors leading to the subsequent expression of OLE1. Has an additional role in the turnover of OLE1 where it targets ubiquitinated OLE1 and other proteins to the ERAD. Regulates ubiquitin-mediated mitochondria protein degradation. Involved in spindle disassembly probably by promoting the degradation of spindle assembly factors ASE1 and CDC5 at the end of mitosis. Component of the ribosome quality control complex (RQC), a ribosome-associated complex that mediates ubiquitination and extraction of incompletely synthesized nascent chains for proteasomal degradation. CDC48 may provide the mechanical force that dislodges the polyubiquitinated nascent peptides from the exit channel. Required for ribophagy, a process which relocalizes ribosomal particles into the vacuole for degradation in response to starvation. Component of the DSC E3 ubiquitin ligase complexes that tag proteins present in Golgi, endosome and vacuole membranes and function in protein homeostasis under non-stress conditions and support a role in protein quality control. Substrate initially binds through the attached polyubiquitin chain to UDF1/NPL4 and then moves through the pore of the ATPase rings and is thereby unfolded. Acts on a broad range of even well-folded proteins via ubiquitin-binding and unfolding to initiate substrate processing. Involved in degradation of mislocalized tail-anchored transmembrane proteins extracted from the mitochondrion outer membrane by MSP1 and ubiquitinated by DOA10. The chain is Cell division control protein 48 from Saccharomyces cerevisiae (strain ATCC 204508 / S288c) (Baker's yeast).